We begin with the raw amino-acid sequence, 239 residues long: Octanoyltransferase (239 aa).

Residues 48–236 (EGGDELVWLV…AFETVFGETV (189 aa)) form the BPL/LPL catalytic domain. Substrate is bound by residues 87–94 (RGGEYTYH), 167–169 (ALG), and 180–182 (GLS). Cysteine 198 acts as the Acyl-thioester intermediate in catalysis.

This sequence belongs to the LipB family.

The protein resides in the cytoplasm. It carries out the reaction octanoyl-[ACP] + L-lysyl-[protein] = N(6)-octanoyl-L-lysyl-[protein] + holo-[ACP] + H(+). The protein operates within protein modification; protein lipoylation via endogenous pathway; protein N(6)-(lipoyl)lysine from octanoyl-[acyl-carrier-protein]: step 1/2. In terms of biological role, catalyzes the transfer of endogenously produced octanoic acid from octanoyl-acyl-carrier-protein onto the lipoyl domains of lipoate-dependent enzymes. Lipoyl-ACP can also act as a substrate although octanoyl-ACP is likely to be the physiological substrate. The protein is Octanoyltransferase of Rhizobium etli (strain CIAT 652).